Reading from the N-terminus, the 322-residue chain is ATP-dependent 6-phosphofructokinase (322 aa).

Position 11 (Gly11) interacts with ATP. 21 to 25 contacts ADP; that stretch reads RAVTR. Residues 72–73 and 102–105 each bind ATP; these read RC and GDGS. Residue Asp103 coordinates Mg(2+). Residue 127-129 participates in substrate binding; the sequence is TID. Asp129 (proton acceptor) is an active-site residue. Arg156 lines the ADP pocket. Residues Arg164 and 171–173 contribute to the substrate site; that span reads MGR. Residues 187 to 189, Arg213, and 215 to 217 contribute to the ADP site; these read GAE and KKH. Substrate is bound by residues Glu224, Arg245, and 251–254; that span reads HIQR.

It belongs to the phosphofructokinase type A (PFKA) family. ATP-dependent PFK group I subfamily. Prokaryotic clade 'B1' sub-subfamily. In terms of assembly, homotetramer. Requires Mg(2+) as cofactor.

It is found in the cytoplasm. It carries out the reaction beta-D-fructose 6-phosphate + ATP = beta-D-fructose 1,6-bisphosphate + ADP + H(+). It participates in carbohydrate degradation; glycolysis; D-glyceraldehyde 3-phosphate and glycerone phosphate from D-glucose: step 3/4. Its activity is regulated as follows. Allosterically activated by ADP and other diphosphonucleosides, and allosterically inhibited by phosphoenolpyruvate. Its function is as follows. Catalyzes the phosphorylation of D-fructose 6-phosphate to fructose 1,6-bisphosphate by ATP, the first committing step of glycolysis. This Staphylococcus epidermidis (strain ATCC 12228 / FDA PCI 1200) protein is ATP-dependent 6-phosphofructokinase.